The primary structure comprises 203 residues: Cilia- and flagella-associated protein 20 (203 aa).

It belongs to the CFAP20 family.

Its subcellular location is the nucleus. It localises to the cytoplasm. It is found in the cytoskeleton. The protein resides in the microtubule organizing center. The protein localises to the centrosome. Its subcellular location is the centriole. It localises to the cilium basal body. It is found in the cilium axoneme. Cilium- and flagellum-specific protein that plays a role in axonemal structure organization and motility. Microtubule inner protein (MIP) part of the dynein-decorated doublet microtubules (DMTs) in cilia axoneme, which is required for motile cilia beating. Involved in the regulation of the size and morphology of cilia. Required for axonemal microtubules polyglutamylation. This chain is Cilia- and flagella-associated protein 20, found in Caenorhabditis elegans.